Consider the following 286-residue polypeptide: MAQEKMELDLELPAGTGASPAEGGGPGSGGLRRSNSAPLIHGLSDSSPVFQAEAPSARRNSTTFPSRHGLLLPASPVRMHSSRLHQIKQEEGMDLINRETVHEREVQTAMQISHSWEESFSLSDNDVEKSASPKRIDFIPVSPAPSPTRGIGKQCFSPSLQSFVSSNGLPPSPIPSPTTRFTTRRSQSPINCIRPSVLGPLKRKCEMETDYQPKRFFQGITNMLSSDVAQLSEPGVCVSSDTLDGNSSSAGSSCNSPAKVSTTTDSPVSPAQAASPFIPVDELSSK.

The tract at residues 1-46 (MAQEKMELDLELPAGTGASPAEGGGPGSGGLRRSNSAPLIHGLSDS) is disordered. The residue at position 34 (S34) is a Phosphoserine. S36 carries the post-translational modification Phosphoserine; by CHEK1. S44, S47, S61, and S75 each carry phosphoserine. K88 participates in a covalent cross-link: Glycyl lysine isopeptide (Lys-Gly) (interchain with G-Cter in SUMO1). Phosphoserine occurs at positions 142 and 146. A Phosphothreonine modification is found at T148. A disordered region spans residues 166–187 (SNGLPPSPIPSPTTRFTTRRSQ). A compositionally biased stretch (low complexity) spans 177 to 187 (PTTRFTTRRSQ). A phosphoserine mark is found at S186 and S188. Residues 238–286 (VSSDTLDGNSSSAGSSCNSPAKVSTTTDSPVSPAQAASPFIPVDELSSK) form a disordered region. The segment covering 245–256 (GNSSSAGSSCNS) has biased composition (low complexity). Positions 258 to 269 (AKVSTTTDSPVS) are enriched in polar residues. Residues S266, S269, and S275 each carry the phosphoserine modification.

Belongs to the FAM122 family. As to quaternary structure, interacts with PPP2CA and PPP2R1A. Interacts (via its N-terminus) with PPP2R2A; the interaction is direct and this interaction inhibits PP2A activity. The CHEK1-mediated Ser-36 phosphorylated form interacts with 14-3-3 proteins. CHEK1-mediated phosphorylation at Ser-36 negatively regulates its ability to inhibit serine/threonine-protein phosphatase 2A (PP2A) activity. Phosphorylation leads to its release from the PP2A complex and its sequestration by 14-3-3 proteins in the cytoplasm resulting in its inability to translocate to the nucleus, where it otherwise inhibits PP2A.

Its subcellular location is the nucleus. The protein resides in the cytoplasm. Its function is as follows. Acts as an inhibitor of serine/threonine-protein phosphatase 2A (PP2A) activity. Inhibits PP2A activity by blocking the substrate binding site on PPP2R2A and the active site of PPP2CA. Potentiates ubiquitin-mediated proteasomal degradation of serine/threonine-protein phosphatase 2A catalytic subunit alpha (PPP2CA). Inhibits PP2A-mediated dephosphorylation of WEE1, promoting ubiquitin-mediated proteolysis of WEE1, thereby releasing G2/M checkpoint. This Rattus norvegicus (Rat) protein is P2R1A-PPP2R2A-interacting phosphatase regulator 1.